Here is a 415-residue protein sequence, read N- to C-terminus: Histidine--tRNA ligase (415 aa).

Belongs to the class-II aminoacyl-tRNA synthetase family. Homodimer.

The protein localises to the cytoplasm. The enzyme catalyses tRNA(His) + L-histidine + ATP = L-histidyl-tRNA(His) + AMP + diphosphate + H(+). This Clostridium botulinum (strain ATCC 19397 / Type A) protein is Histidine--tRNA ligase.